We begin with the raw amino-acid sequence, 295 residues long: Nucleotide-binding protein YjiE (295 aa).

12–19 (GMSGAGKT) is a binding site for ATP. 63-66 (DMRS) lines the GTP pocket.

This sequence belongs to the RapZ-like family.

In terms of biological role, displays ATPase and GTPase activities. The protein is Nucleotide-binding protein YjiE (yjiE) of Lactococcus lactis subsp. lactis (strain IL1403) (Streptococcus lactis).